The sequence spans 304 residues: UDP-N-acetylenolpyruvoylglucosamine reductase (304 aa).

Residues 34–198 enclose the FAD-binding PCMH-type domain; sequence IGGKADFLVW…LEVVFALQPG (165 aa). Arg-177 is a catalytic residue. Ser-227 functions as the Proton donor in the catalytic mechanism. Glu-297 is a catalytic residue.

This sequence belongs to the MurB family. Requires FAD as cofactor.

The protein localises to the cytoplasm. The enzyme catalyses UDP-N-acetyl-alpha-D-muramate + NADP(+) = UDP-N-acetyl-3-O-(1-carboxyvinyl)-alpha-D-glucosamine + NADPH + H(+). The protein operates within cell wall biogenesis; peptidoglycan biosynthesis. Its function is as follows. Cell wall formation. The sequence is that of UDP-N-acetylenolpyruvoylglucosamine reductase from Geobacillus thermodenitrificans (strain NG80-2).